The following is a 105-amino-acid chain: Met repressor (105 aa).

Belongs to the MetJ family. In terms of assembly, homodimer.

The protein resides in the cytoplasm. Its function is as follows. This regulatory protein, when combined with SAM (S-adenosylmethionine) represses the expression of the methionine regulon and of enzymes involved in SAM synthesis. The chain is Met repressor from Klebsiella pneumoniae subsp. pneumoniae (strain ATCC 700721 / MGH 78578).